The primary structure comprises 796 residues: Histone acetyltransferase KAT2B (796 aa).

3 disordered regions span residues 1–32 (MSES…TECS), 77–97 (WKSQ…AEQP), and 371–408 (AGGG…DSKR). A compositionally biased stretch (low complexity) spans 10–24 (GSPAVGAAGSAPAAP). Positions 81–94 (NPPPTPPPPTPPRA) are enriched in pro residues. Over residues 392–408 (GEKRKPAEPLSHEDSKR) the composition is skewed to basic and acidic residues. Residues 469–617 (LNQKPNKKIL…GATLMGCELN (149 aa)) enclose the N-acetyltransferase domain. The Proton donor/acceptor role is filled by Glu-536. Residues 540 to 542 (CAV), 547 to 553 (QVKGYGT), and 578 to 581 (YAIG) contribute to the acetyl-CoA site. The Bromo domain maps to 687–791 (KDPDQLYSTL…KFFYTKIKEA (105 aa)).

It belongs to the acetyltransferase family. GCN5 subfamily.

The protein resides in the nucleus. Its subcellular location is the cytoplasm. It localises to the cytoskeleton. It is found in the microtubule organizing center. The protein localises to the centrosome. It catalyses the reaction L-lysyl-[histone] + acetyl-CoA = N(6)-acetyl-L-lysyl-[histone] + CoA + H(+). It carries out the reaction L-lysyl-[protein] + acetyl-CoA = N(6)-acetyl-L-lysyl-[protein] + CoA + H(+). The enzyme catalyses spermidine + acetyl-CoA = N(8)-acetylspermidine + CoA + H(+). Its function is as follows. Functions as a histone acetyltransferase (HAT) to promote transcriptional activation. Has significant histone acetyltransferase activity with core histones (H3 and H4), and also with nucleosome core particles. Has a a strong preference for acetylation of H3 at 'Lys-9' (H3K9ac). Also acetylates non-histone proteins. Involved in heart and limb development by mediating acetylation of tbx5. Also acetylates spermidine. Together with kat2a, required for growth and differentiation of craniofacial cartilage and bone by regulating acetylation of histone H3 at 'Lys-9' (H3K9ac). This Danio rerio (Zebrafish) protein is Histone acetyltransferase KAT2B.